Here is a 184-residue protein sequence, read N- to C-terminus: dCTP deaminase (184 aa).

107-112 provides a ligand contact to dCTP; it reads KSTYAR. E133 serves as the catalytic Proton donor/acceptor. Residues Q152, Y166, and Q176 each coordinate dCTP.

This sequence belongs to the dCTP deaminase family. In terms of assembly, homotrimer.

The catalysed reaction is dCTP + H2O + H(+) = dUTP + NH4(+). The protein operates within pyrimidine metabolism; dUMP biosynthesis; dUMP from dCTP (dUTP route): step 1/2. In terms of biological role, catalyzes the deamination of dCTP to dUTP. The polypeptide is dCTP deaminase (Granulibacter bethesdensis (strain ATCC BAA-1260 / CGDNIH1)).